Here is a 354-residue protein sequence, read N- to C-terminus: Uroporphyrinogen decarboxylase (354 aa).

Substrate contacts are provided by residues 27 to 31 (RQAGR), Asp-77, Tyr-154, Ser-209, and His-327.

It belongs to the uroporphyrinogen decarboxylase family. In terms of assembly, homodimer.

The protein localises to the cytoplasm. It catalyses the reaction uroporphyrinogen III + 4 H(+) = coproporphyrinogen III + 4 CO2. It participates in porphyrin-containing compound metabolism; protoporphyrin-IX biosynthesis; coproporphyrinogen-III from 5-aminolevulinate: step 4/4. In terms of biological role, catalyzes the decarboxylation of four acetate groups of uroporphyrinogen-III to yield coproporphyrinogen-III. The sequence is that of Uroporphyrinogen decarboxylase from Methylobacillus flagellatus (strain ATCC 51484 / DSM 6875 / VKM B-1610 / KT).